The primary structure comprises 138 residues: ATP synthase epsilon chain (138 aa).

This sequence belongs to the ATPase epsilon chain family. As to quaternary structure, F-type ATPases have 2 components, CF(1) - the catalytic core - and CF(0) - the membrane proton channel. CF(1) has five subunits: alpha(3), beta(3), gamma(1), delta(1), epsilon(1). CF(0) has three main subunits: a, b and c.

Its subcellular location is the cell inner membrane. Its function is as follows. Produces ATP from ADP in the presence of a proton gradient across the membrane. This chain is ATP synthase epsilon chain, found in Wigglesworthia glossinidia brevipalpis.